The chain runs to 284 residues: 2-dehydro-3-deoxyphosphooctonate aldolase (284 aa).

The protein belongs to the KdsA family.

It localises to the cytoplasm. It carries out the reaction D-arabinose 5-phosphate + phosphoenolpyruvate + H2O = 3-deoxy-alpha-D-manno-2-octulosonate-8-phosphate + phosphate. Its pathway is carbohydrate biosynthesis; 3-deoxy-D-manno-octulosonate biosynthesis; 3-deoxy-D-manno-octulosonate from D-ribulose 5-phosphate: step 2/3. It participates in bacterial outer membrane biogenesis; lipopolysaccharide biosynthesis. The sequence is that of 2-dehydro-3-deoxyphosphooctonate aldolase from Escherichia coli O6:H1 (strain CFT073 / ATCC 700928 / UPEC).